The chain runs to 83 residues: Short neurotoxin 1 (83 aa).

The signal sequence occupies residues 1–21 (MKTLLLTLVVVTIVCLDLGYT). 4 cysteine pairs are disulfide-bonded: cysteine 24–cysteine 45, cysteine 38–cysteine 62, cysteine 64–cysteine 75, and cysteine 76–cysteine 81.

The protein belongs to the three-finger toxin family. Short-chain subfamily. Type I alpha-neurotoxin sub-subfamily. Expressed by the venom gland.

It is found in the secreted. Functionally, binds to muscle nicotinic acetylcholine receptor (nAChR) and inhibit acetylcholine from binding to the receptor, thereby impairing neuromuscular transmission. This chain is Short neurotoxin 1, found in Oxyuranus scutellatus scutellatus (Australian taipan).